The primary structure comprises 146 residues: Large ribosomal subunit protein uL15 (146 aa).

The span at methionine 1–arginine 13 shows a compositional bias: basic and acidic residues. Residues methionine 1–glutamine 54 form a disordered region. Residues threonine 23–glutamine 35 show a composition bias toward gly residues.

Belongs to the universal ribosomal protein uL15 family. Part of the 50S ribosomal subunit.

Binds to the 23S rRNA. The protein is Large ribosomal subunit protein uL15 of Lactobacillus johnsonii (strain CNCM I-12250 / La1 / NCC 533).